The sequence spans 255 residues: tRNA (adenine(58)-N(1))-methyltransferase TrmI (255 aa).

Residues 104-107, Glu-125, His-130, Glu-155, and Asp-170 contribute to the S-adenosyl-L-methionine site; that span reads SGGL.

The protein belongs to the class I-like SAM-binding methyltransferase superfamily. TRM61 family. In terms of assembly, homotetramer composed of a dimer of dimers.

It catalyses the reaction adenosine(58) in tRNA + S-adenosyl-L-methionine = N(1)-methyladenosine(58) in tRNA + S-adenosyl-L-homocysteine + H(+). Functionally, catalyzes the S-adenosyl-L-methionine-dependent formation of N(1)-methyladenine at position 58 (m1A58) in tRNA. This chain is tRNA (adenine(58)-N(1))-methyltransferase TrmI (trmI), found in Thermus thermophilus (strain ATCC 27634 / DSM 579 / HB8).